We begin with the raw amino-acid sequence, 185 residues long: Nucleoside triphosphate pyrophosphatase (185 aa).

D70 serves as the catalytic Proton acceptor.

Belongs to the Maf family. It depends on a divalent metal cation as a cofactor.

Its subcellular location is the cytoplasm. It catalyses the reaction a ribonucleoside 5'-triphosphate + H2O = a ribonucleoside 5'-phosphate + diphosphate + H(+). It carries out the reaction a 2'-deoxyribonucleoside 5'-triphosphate + H2O = a 2'-deoxyribonucleoside 5'-phosphate + diphosphate + H(+). Its function is as follows. Nucleoside triphosphate pyrophosphatase. May have a dual role in cell division arrest and in preventing the incorporation of modified nucleotides into cellular nucleic acids. The polypeptide is Nucleoside triphosphate pyrophosphatase (Nitratiruptor sp. (strain SB155-2)).